The chain runs to 476 residues: Glycogen synthase (476 aa).

Position 15 (Lys15) interacts with ADP-alpha-D-glucose.

It belongs to the glycosyltransferase 1 family. Bacterial/plant glycogen synthase subfamily.

The catalysed reaction is [(1-&gt;4)-alpha-D-glucosyl](n) + ADP-alpha-D-glucose = [(1-&gt;4)-alpha-D-glucosyl](n+1) + ADP + H(+). The protein operates within glycan biosynthesis; glycogen biosynthesis. Its function is as follows. Synthesizes alpha-1,4-glucan chains using ADP-glucose. This chain is Glycogen synthase, found in Ligilactobacillus salivarius (strain UCC118) (Lactobacillus salivarius).